The following is a 184-amino-acid chain: Ribosome-recycling factor (184 aa).

Belongs to the RRF family.

It is found in the cytoplasm. Responsible for the release of ribosomes from messenger RNA at the termination of protein biosynthesis. May increase the efficiency of translation by recycling ribosomes from one round of translation to another. This Borrelia recurrentis (strain A1) protein is Ribosome-recycling factor.